Here is a 461-residue protein sequence, read N- to C-terminus: uncharacterized protein (461 aa).

The segment covering Met-1–Tyr-19 has biased composition (basic and acidic residues). The interval Met-1 to Ile-21 is disordered.

This sequence belongs to the CapA family.

Functionally, could be involved in the biosynthesis of a cell wall component. This is an uncharacterized protein from Sinorhizobium fredii (strain NBRC 101917 / NGR234).